A 270-amino-acid chain; its full sequence is MLGLQIFTLLSIPTLLYTYEIEPLERTSTPPEKEFGYWCTYANHCRFCWDCQDGICRNKAFKNHSPILENDYIANCSIYRRNDFCIYHITSIKPHKTYRTECPQHINHERHEADIRKWQKLLTYGFYLAGCILAVNYIRKRSLQTVMYLLVFLVISFLLSQLMLYGELEDKKHKIGSIPPKRELEHWCTHGKYCNFCWDCQNGICKNKAFKNHPPIGENDFIRYDCWTTHLPNKCSYEKIYKHFDTHIMECSQPTHFKWYDNLMKKQDIM.

An N-terminal signal peptide occupies residues 1 to 26; that stretch reads MLGLQIFTLLSIPTLLYTYEIEPLER. Residues 27-117 are Extracellular-facing; that stretch reads TSTPPEKEFG…HERHEADIRK (91 aa). The A repeat unit spans residues 27 to 146; sequence TSTPPEKEFG…YIRKRSLQTV (120 aa). An N-linked (GlcNAc...) asparagine; by host glycan is attached at N75. The chain crosses the membrane as a helical span at residues 118 to 138; that stretch reads WQKLLTYGFYLAGCILAVNYI. The Cytoplasmic portion of the chain corresponds to 139–145; it reads RKRSLQT. A helical membrane pass occupies residues 146-166; the sequence is VMYLLVFLVISFLLSQLMLYG. The stretch at 147–270 is one B repeat; sequence MYLLVFLVIS…DNLMKKQDIM (124 aa). At 167-270 the chain is on the extracellular side; it reads ELEDKKHKIG…DNLMKKQDIM (104 aa).

The protein belongs to the asfivirus MGF 110 family.

The protein localises to the membrane. Functionally, plays a role in virus cell tropism, and may be required for efficient virus replication in macrophages. The protein is Protein MGF 110-1L of African swine fever virus (isolate Pig/Portugal/OURT88/1988) (ASFV).